The primary structure comprises 295 residues: Acetylglutamate kinase (295 aa).

Residues 66–67 (GG), R88, and N193 contribute to the substrate site.

The protein belongs to the acetylglutamate kinase family. ArgB subfamily.

Its subcellular location is the cytoplasm. The catalysed reaction is N-acetyl-L-glutamate + ATP = N-acetyl-L-glutamyl 5-phosphate + ADP. It functions in the pathway amino-acid biosynthesis; L-arginine biosynthesis; N(2)-acetyl-L-ornithine from L-glutamate: step 2/4. Its function is as follows. Catalyzes the ATP-dependent phosphorylation of N-acetyl-L-glutamate. The polypeptide is Acetylglutamate kinase (Sinorhizobium medicae (strain WSM419) (Ensifer medicae)).